The primary structure comprises 159 residues: MPRKGLRPRDRRALPEADYKYDSVLVARFVNKINFEGKKATAEKIVADSMVIIADKTKEDAMTVFNRCIETVRPLLELKARRVGGATYQVPVEVKPLRSTSLAMCWLLDAARSRKGRPMAEKLAEEIILGSKKEGAAFKKREDTHRMAEANRAFAHFKW.

Belongs to the universal ribosomal protein uS7 family. As to quaternary structure, part of the 30S ribosomal subunit. Contacts proteins S9 and S11.

In terms of biological role, one of the primary rRNA binding proteins, it binds directly to 16S rRNA where it nucleates assembly of the head domain of the 30S subunit. Is located at the subunit interface close to the decoding center, probably blocks exit of the E-site tRNA. The polypeptide is Small ribosomal subunit protein uS7 (Elusimicrobium minutum (strain Pei191)).